Consider the following 218-residue polypeptide: UPF0502 protein Mmwyl1_3509 (218 aa).

The protein belongs to the UPF0502 family.

In Marinomonas sp. (strain MWYL1), this protein is UPF0502 protein Mmwyl1_3509.